Here is a 388-residue protein sequence, read N- to C-terminus: Alanine racemase (388 aa).

Residue K44 is the Proton acceptor; specific for D-alanine of the active site. Position 44 is an N6-(pyridoxal phosphate)lysine (K44). R142 contributes to the substrate binding site. Y273 (proton acceptor; specific for L-alanine) is an active-site residue. M321 contributes to the substrate binding site.

This sequence belongs to the alanine racemase family. Requires pyridoxal 5'-phosphate as cofactor.

It carries out the reaction L-alanine = D-alanine. Its pathway is amino-acid biosynthesis; D-alanine biosynthesis; D-alanine from L-alanine: step 1/1. Its function is as follows. Catalyzes the interconversion of L-alanine and D-alanine. May also act on other amino acids. The protein is Alanine racemase (alr) of Mycobacterium ulcerans (strain Agy99).